A 471-amino-acid polypeptide reads, in one-letter code: Putative multidrug resistance protein MdtD (471 aa).

The Periplasmic segment spans residues 1 to 11; the sequence is MTDLPDSTRWQ. The helical transmembrane segment at 12-32 threads the bilayer; it reads LWIVAFGFFMQSLDTTIVNTA. Residues 33–48 are Cytoplasmic-facing; that stretch reads LPSMAQSLGESPLHMH. A helical membrane pass occupies residues 49–69; that stretch reads MVIVSYVLTVAVMLPASGWLA. Topologically, residues 70 to 76 are periplasmic; that stretch reads DKVGVRN. The helical transmembrane segment at 77 to 97 threads the bilayer; sequence IFFTAIVLFTLGSLFCALSGT. Topologically, residues 98-101 are cytoplasmic; the sequence is LNEL. Residues 102-124 traverse the membrane as a helical segment; sequence LLARALQGVGGAMMVPVGRLTVM. Over 125-137 the chain is Periplasmic; that stretch reads KIVPREQYMAAMT. A helical transmembrane segment spans residues 138–158; it reads FVTLPGQVGPLLGPALGGLLV. The Cytoplasmic portion of the chain corresponds to 159–164; it reads EYASWH. The helical transmembrane segment at 165–185 threads the bilayer; it reads WIFLINIPVGIIGAIATLLLM. The Periplasmic segment spans residues 186–196; sequence PNYTMQTWRFD. A helical transmembrane segment spans residues 197–217; the sequence is LSGFLLLAVGMAVLTLALDGS. The Cytoplasmic portion of the chain corresponds to 218 to 224; that stretch reads KGTGLSP. Residues 225 to 245 traverse the membrane as a helical segment; the sequence is LAIAGLVAVGVVALVLYLLHA. Over 246–262 the chain is Periplasmic; it reads RNNNRALFSLKLFRTRT. A helical transmembrane segment spans residues 263–283; that stretch reads FSLGLAGSFAGRIGSGMLPFM. The Cytoplasmic segment spans residues 284–285; it reads TP. A helical transmembrane segment spans residues 286–306; sequence VFLQIGLGFSPFHAGLMMIPM. The Periplasmic segment spans residues 307-341; that stretch reads VLGSMGMKRIVVQVVNRFGYRRVLVATTLGLSLVT. A helical transmembrane segment spans residues 342–362; sequence LLFMTTALLGWYYVLPFVLFL. Topologically, residues 363–395 are cytoplasmic; it reads QGMVNSTRFSSMNTLTLKDLPDNLASSGNSLLS. Residues 396–416 form a helical membrane-spanning segment; sequence MIMQLSMSIGVTIAGLLLGLF. Residues 417-430 lie on the Periplasmic side of the membrane; the sequence is GSQHVSVDSGTTQT. The chain crosses the membrane as a helical span at residues 431-451; it reads VFMYTWLSMALIIALPAFIFA. At 452 to 471 the chain is on the cytoplasmic side; it reads RVPNDTHQNVAISRRKRSAQ.

This sequence belongs to the major facilitator superfamily. TCR/Tet family.

Its subcellular location is the cell inner membrane. The protein is Putative multidrug resistance protein MdtD of Shigella boydii serotype 4 (strain Sb227).